A 134-amino-acid chain; its full sequence is Protein OPG030 (134 aa).

Residues 88–133 (YKENGLRNSFLRQYINNNIEEIRNTDQFLKFDVDSVCDILNNDETI) form the BACK domain.

Belongs to the orthopoxvirus OPG030 family.

The polypeptide is Protein OPG030 (OPG30) (Variola virus (isolate Human/India/Ind3/1967) (VARV)).